Reading from the N-terminus, the 116-residue chain is Small ribosomal subunit protein bS16 (116 aa).

This sequence belongs to the bacterial ribosomal protein bS16 family.

The polypeptide is Small ribosomal subunit protein bS16 (Chlamydia trachomatis serovar L2 (strain ATCC VR-902B / DSM 19102 / 434/Bu)).